Reading from the N-terminus, the 407-residue chain is MFSKIIQSYAKGNLIIQICAGIALGILIGINSKEISEIANLLGILFTSALKAIAPMLVFILILTSICTKDFSQSGVKIKNIIILYIVGTFLASACAILANFFFPVKLVLDGIQATTNPSPAHMGEIFKDLLFKIVDNPINALSSGNYLGILTWAIAGGAALKHCSNEAKQVFIDINEGVLKIVKFVVKLAPFGIFGLVANSVAQTGAQGLLSYTKLLILLVATMLFVTFVINALIVFFYTRKNPFPLIFICLRHSAFFAFFTRSSAANIPVNMALCAKLGIDKEFYGISIPLGATINMAGAAVTIAILSLTAANTVGIEISLLQAFLLSIIATFAASGASGVAGGSLLLIPLACSLFNIDYDIAMKVVAIGFIIGVIQDSVETALNSSTDVLFTAICSKNELNYNIK.

The next 9 helical transmembrane spans lie at 10 to 30, 42 to 62, 81 to 101, 141 to 161, 179 to 199, 218 to 238, 245 to 267, 288 to 308, and 316 to 336; these read AKGN…LIGI, LGIL…FILI, IIIL…LANF, ALSS…GAAL, VLKI…GLVA, ILLV…IVFF, FPLI…SSAA, ISIP…IAIL, and VGIE…TFAA.

The protein belongs to the dicarboxylate/amino acid:cation symporter (DAACS) (TC 2.A.23) family.

It is found in the cell inner membrane. It carries out the reaction L-serine(in) + Na(+)(in) = L-serine(out) + Na(+)(out). The catalysed reaction is L-threonine(in) + Na(+)(in) = L-threonine(out) + Na(+)(out). Involved in the import of serine and threonine into the cell, with the concomitant import of sodium (symport system). The polypeptide is Serine/threonine transporter SstT (Campylobacter jejuni subsp. doylei (strain ATCC BAA-1458 / RM4099 / 269.97)).